The sequence spans 417 residues: Sterile alpha motif domain-containing protein 14 (417 aa).

Residues leucine 37–histidine 306 form a disordered region. Positions lysine 40–serine 49 are enriched in basic residues. 2 positions are modified to phosphoserine: serine 84 and serine 108. A compositionally biased stretch (low complexity) spans serine 138–serine 153. Residues proline 159–serine 173 show a composition bias toward basic and acidic residues. Serine 173 and serine 179 each carry phosphoserine. 2 stretches are compositionally biased toward low complexity: residues serine 244–serine 260 and serine 276–proline 289. Serine 279 carries the phosphoserine modification. Threonine 283 bears the Phosphothreonine mark. In terms of domain architecture, SAM spans tryptophan 326 to alanine 389. Residues aspartate 375–lysine 416 adopt a coiled-coil conformation. The segment at alanine 390–serine 417 is disordered.

This Rattus norvegicus (Rat) protein is Sterile alpha motif domain-containing protein 14 (Samd14).